The chain runs to 582 residues: MSSSSSSSLPTSSASTTTSSITSRPSASHHLESILSSSSSSPSILSSLTTQSTSSIPTSSSSSSQRQSTSNADRPVSPKPMPTPTTLSEWQLLAVLSKANLVQYYDVFIAQGGDDINQIMACEEREFLEIMNLVGMLPKPLHVRRMQRALAEYSQDQTAFNLAALQQIGPPPPLNYTPAGTDPMALLLPGIAAATSPKFPSLRFLSQLSSVAEKVSTPSEAADTSSSSPSLNLNTTSSNSVPLAFKFSTPLLESLASDQQSSSTSSVRSVLPSTSSNTSHPELPAGILPATTTNVSAAVPPPSSRATANVFSGNSIGLNFSGAASVTRHLVVPPSSTSIQQPSTSFGRSSSITGQEKEGSSSPFLGVGYSQPYGNDFVSLGDFDPNNPSLTENPTLSTAQISRLAECALAASKNLPPLPPRLVQNKKRVSKEVIELLKCSPATPSMIHAFRKYSAIYGRFDTKRKPHKVLTLHETTVNEAAAQLCLLVPSLLTRRDELFPLARQIVKDAGYNYAKSRKRPCDPADLHSPISSPGNSPPPQESEFDEQPSSSSGAFKEEERPPIPPEAWAAIIEKMKGELPES.

Low complexity predominate over residues 1–70 (MSSSSSSSLP…SSSSQRQSTS (70 aa)). 4 disordered regions span residues 1–84 (MSSS…MPTP), 257–287 (SDQQ…PAGI), 333–365 (PPSS…SPFL), and 516–582 (SRKR…LPES). The segment at 83 to 161 (TPTTLSEWQL…EYSQDQTAFN (79 aa)) is NCD1. Composition is skewed to low complexity over residues 257-276 (SDQQ…STSS) and 333-345 (PPSS…PSTS). The segment at 396–519 (LSTAQISRLA…GYNYAKSRKR (124 aa)) is NCD2. A compositionally biased stretch (basic and acidic residues) spans 573–582 (EKMKGELPES).

Belongs to the NAB family. As to quaternary structure, interacts with transcription factor lin-29 (via C-terminus).

It localises to the nucleus. Transcriptional cofactor. Heterochronic protein, involved in timing of a subset of differentiation events during the larval-to-adult transition. Promotes hypodermal terminal differentiation, together with transcription factor lin-29, perhaps as part of a transcriptional complex. Involved in regulating molting by repressing the expression of nuclear hormone receptors nhr-23 and nhr-25 in the adult hypoderm, probably acting in concert with lin-29. The sequence is that of NAB transcription cofactor mab-10 from Caenorhabditis elegans.